Consider the following 307-residue polypeptide: Coenzyme PQQ synthesis protein B (307 aa).

It belongs to the PqqB family.

It participates in cofactor biosynthesis; pyrroloquinoline quinone biosynthesis. In terms of biological role, may be involved in the transport of PQQ or its precursor to the periplasm. In Gluconacetobacter diazotrophicus (strain ATCC 49037 / DSM 5601 / CCUG 37298 / CIP 103539 / LMG 7603 / PAl5), this protein is Coenzyme PQQ synthesis protein B.